We begin with the raw amino-acid sequence, 645 residues long: Transcription termination factor FttA (645 aa).

The tract at residues Ala10–Arg77 is KHa. A KHb region spans residues Lys78–Thr146. The segment at Glu187 to Lys391 is metallo-beta-lactamase N-terminus. Zn(2+) is bound by residues His250, His252, Asp254, His255, His337, and Asp360. The beta-Casp stretch occupies residues Glu392–Ser586. The interval Gly587–Phe645 is metallo-beta-lactamase C-terminus. His612 is a binding site for Zn(2+).

It belongs to the metallo-beta-lactamase superfamily. RNA-metabolizing metallo-beta-lactamase-like family. FttA subfamily. As to quaternary structure, homodimer. Interacts with RNA polymerase (RNAP), interacts with the Spt4-Spt5 complex. Zn(2+) serves as cofactor.

Terminates transcription on the whole genome. Termination is linked to FttA-mediated RNA cleavage and does not require NTP hydrolysis. Cleaves endonucleolytically at the RNA exit channel of RNA polymerase (RNAP); the 5'-3' exonuclease activity of this protein degrades the nascent RNA released from RNAP. In terms of biological role, terminates transcription genome-wide in M.maripaludis. Restores wild-type growth to a strain of Methanococcus maripaludis depleted for this gene at 22 degrees Celsius and prevents transcriptional read-through. Transcription termination is most effective in vivo on RNAs with more than one U4-tract in their 3'-ends. Has endonuclease activity after U-rich tracts in transcription termination sequences. This chain is Transcription termination factor FttA, found in Cenarchaeum symbiosum (strain A).